A 317-amino-acid polypeptide reads, in one-letter code: MEELNTIKLSDHLTPFLTFNRQQWAELRKSVPLKLTEQDLKPLLGFNEELSLEEVSTIYLPLARLINYYIEENLRRQTVLKRFLSGHNPKVPYIISIAGSVSVGKSTSARILQSLLANWPVARKVDLITTDGFLYPLEILQKKNLLQKKGFPISYDTQRLIRFLADIKSGKKNVKAPIYSHLTYDIIPNQFDIVDRPDILILEGLNVLQIGSNKSNQMFVSDFVDFSIFVDAEEDQLKEWYIKRFLKFCRSAFTDPNSYFKHYANLSEQEAIETASQIWDNINGLNLKQNILPTRERANLILKKGENHKVELVKLRK.

99–106 (GSVSVGKS) contacts ATP.

The protein belongs to the prokaryotic pantothenate kinase family.

The protein localises to the cytoplasm. The enzyme catalyses (R)-pantothenate + ATP = (R)-4'-phosphopantothenate + ADP + H(+). Its pathway is cofactor biosynthesis; coenzyme A biosynthesis; CoA from (R)-pantothenate: step 1/5. The polypeptide is Pantothenate kinase (Histophilus somni (strain 2336) (Haemophilus somnus)).